We begin with the raw amino-acid sequence, 1045 residues long: Unconventional myosin-Ia (1045 aa).

A Myosin motor domain is found at 11–697; sequence AAVGDLVMLD…TLFDLEKRRQ (687 aa). Residue 104–111 coordinates ATP; it reads GESGAGKT. Residues 574-596 are actin-binding; the sequence is VATLMKNLYSKNPNYIRCIKPND. IQ domains lie at 701–727, 723–750, and 746–774; these read AELA…RKSQ, MRKS…KRSV, and MKRS…RSDA. A TH1 domain is found at 861-1044; it reads KALYAQSLQQ…RGSHKMEILV (184 aa).

This sequence belongs to the TRAFAC class myosin-kinesin ATPase superfamily. Myosin family. Intestine.

Functionally, could play an important role in morphogenesis and function of intestinal microvilli. This Gallus gallus (Chicken) protein is Unconventional myosin-Ia (MYO1A).